The chain runs to 352 residues: UDP-N-acetylglucosamine--N-acetylmuramyl-(pentapeptide) pyrophosphoryl-undecaprenol N-acetylglucosamine transferase (352 aa).

UDP-N-acetyl-alpha-D-glucosamine-binding positions include 11-13 (TGG), Asn120, Arg161, Ser188, and Gln286.

Belongs to the glycosyltransferase 28 family. MurG subfamily.

The protein localises to the cell inner membrane. It catalyses the reaction di-trans,octa-cis-undecaprenyl diphospho-N-acetyl-alpha-D-muramoyl-L-alanyl-D-glutamyl-meso-2,6-diaminopimeloyl-D-alanyl-D-alanine + UDP-N-acetyl-alpha-D-glucosamine = di-trans,octa-cis-undecaprenyl diphospho-[N-acetyl-alpha-D-glucosaminyl-(1-&gt;4)]-N-acetyl-alpha-D-muramoyl-L-alanyl-D-glutamyl-meso-2,6-diaminopimeloyl-D-alanyl-D-alanine + UDP + H(+). Its pathway is cell wall biogenesis; peptidoglycan biosynthesis. Cell wall formation. Catalyzes the transfer of a GlcNAc subunit on undecaprenyl-pyrophosphoryl-MurNAc-pentapeptide (lipid intermediate I) to form undecaprenyl-pyrophosphoryl-MurNAc-(pentapeptide)GlcNAc (lipid intermediate II). The polypeptide is UDP-N-acetylglucosamine--N-acetylmuramyl-(pentapeptide) pyrophosphoryl-undecaprenol N-acetylglucosamine transferase (Prochlorococcus marinus (strain NATL1A)).